Here is a 345-residue protein sequence, read N- to C-terminus: Ribosomal RNA small subunit methyltransferase H (345 aa).

Residues 47–49 (GGY), Asp65, Phe92, Asp113, and Gln120 each bind S-adenosyl-L-methionine. A disordered region spans residues 296 to 345 (EPGPDEVAGNPRARSAKLRAAERTNAPAHPGGDLMGLLPAPPPQRHGRRR).

It belongs to the methyltransferase superfamily. RsmH family.

The protein resides in the cytoplasm. It catalyses the reaction cytidine(1402) in 16S rRNA + S-adenosyl-L-methionine = N(4)-methylcytidine(1402) in 16S rRNA + S-adenosyl-L-homocysteine + H(+). Specifically methylates the N4 position of cytidine in position 1402 (C1402) of 16S rRNA. The polypeptide is Ribosomal RNA small subunit methyltransferase H (Xanthobacter autotrophicus (strain ATCC BAA-1158 / Py2)).